The following is a 302-amino-acid chain: ATP synthase mitochondrial F1 complex assembly factor 1 (302 aa).

It belongs to the ATP11 family. Interacts with ATP5F1B; involved in the assembly of the F1 component of the mitochondrial ATP synthase (ATPase).

It is found in the mitochondrion inner membrane. Has a complex stabilizing activity in the assembly of the mitochondrial F1-F0 complex. In Danio rerio (Zebrafish), this protein is ATP synthase mitochondrial F1 complex assembly factor 1 (atpaf1).